We begin with the raw amino-acid sequence, 295 residues long: Xyloglucan endotransglucosylase protein 2 (295 aa).

The signal sequence occupies residues 1–23 (MAMGTHFGGLWLALLCMVSATMG). The region spanning 24 to 222 (AVPRKPVDVP…WSKAPFVASY (199 aa)) is the GH16 domain. The Nucleophile role is filled by Glu108. Glu112 serves as the catalytic Proton donor. Position 112 (Glu112) interacts with xyloglucan. Residue Asn116 is glycosylated (N-linked (GlcNAc...) asparagine). Xyloglucan-binding positions include 125–127 (QTN), 135–137 (DRE), 201–202 (DW), and Gly206. 2 cysteine pairs are disulfide-bonded: Cys230–Cys239 and Cys276–Cys289. Arg281 lines the xyloglucan pocket.

This sequence belongs to the glycosyl hydrolase 16 family. XTH group 1 subfamily. In terms of processing, contains at least one intrachain disulfide bond essential for its enzymatic activity. Expressed in fruit pulp.

Its subcellular location is the secreted. It is found in the cell wall. The protein resides in the extracellular space. It localises to the apoplast. It catalyses the reaction breaks a beta-(1-&gt;4) bond in the backbone of a xyloglucan and transfers the xyloglucanyl segment on to O-4 of the non-reducing terminal glucose residue of an acceptor, which can be a xyloglucan or an oligosaccharide of xyloglucan.. Catalyzes xyloglucan endotransglycosylation (XET). Cleaves and religates xyloglucan polymers. Does not catalyze xyloglucan endohydrolysis (XEH). Probably involved in cell wall restructuring during fruit ripening and postharvest fruit softening. This chain is Xyloglucan endotransglucosylase protein 2, found in Diospyros kaki (Kaki persimmon).